The chain runs to 202 residues: Putative transmembrane protein ORF202 (202 aa).

5 helical membrane passes run A13 to I33, V40 to G60, Y87 to F107, Y156 to S176, and L177 to A197.

The protein resides in the host membrane. The sequence is that of Putative transmembrane protein ORF202 from Acidianus filamentous virus 2 (isolate Italy/Pozzuoli) (AFV-2).